A 321-amino-acid polypeptide reads, in one-letter code: Transmembrane protein 255A (321 aa).

A run of 4 helical transmembrane segments spans residues 29–49 (VFVTVTLLIVSSLIFTLGMAA), 56–76 (VTVGGYYPGVILGFGSILGII), 88–108 (LVASIVFISFGVIAAFCCAIV), and 200–220 (TILNIVGLFLGIITAAVLGGF). The span at 279-297 (STPSGLSDDPNGQASSFMW) shows a compositional bias: polar residues. Positions 279–300 (STPSGLSDDPNGQASSFMWPSN) are disordered.

Belongs to the TMEM255 family.

Its subcellular location is the membrane. In Xenopus laevis (African clawed frog), this protein is Transmembrane protein 255A (tmem255a).